Here is a 745-residue protein sequence, read N- to C-terminus: MLPFAPQDEPWDREMEVFSGGGASSGEVNGLKMVDEPMEEGEADSCHDEGVVKEIPITHHVKEGYEKADPAQFELLKVLGQGSFGKVFLVRKKTGPDAGQLYAMKVLKKASLKVRDRVRTKMERDILVEVNHPFIVKLHYAFQTEGKLYLILDFLRGGDVFTRLSKEVLFTEEDVKFYLAELALALDHLHQLGIVYRDLKPENILLDEIGHIKLTDFGLSKESVDQEKKAYSFCGTVEYMAPEVVNRRGHSQSADWWSYGVLMFEMLTGTLPFQGKDRNETMNMILKAKLGMPQFLSAEAQSLLRMLFKRNPANRLGSEGVEEIKRHLFFANIDWDKLYKREVQPPFKPASGKPDDTFCFDPEFTAKTPKDSPGLPASANAHQLFKGFSFVATSIAEEYKITPITSANVLPIVQINGNAAQFGEVYELKEDIGVGSYSVCKRCIHATTNMEFAVKIIDKSKRDPSEEIEILMRYGQHPNIITLKDVFDDGRYVYLVTDLMKGGELLDRILKQKCFSEREASDILYVISKTVDYLHCQGVVHRDLKPSNILYMDESASADSIRICDFGFAKQLRGENGLLLTPCYTANFVAPEVLMQQGYDAACDIWSLGVLFYTMLAGYTPFANGPNDTPEEILLRIGNGKFSLSGGNWDNISDGAKDLLSHMLHMDPHQRYTAEQILKHSWITHRDQLPNDQPKRNDVSHVVKGAMVATYSALTHKTFQPVLEPVAASSLAQRRSMKKRTSTGL.

Positions 1–28 are disordered; the sequence is MLPFAPQDEPWDREMEVFSGGGASSGEV. The 258-residue stretch at 73–330 folds into the Protein kinase 1 domain; the sequence is FELLKVLGQG…VEEIKRHLFF (258 aa). Residues 79 to 87 and lysine 105 contribute to the ATP site; that span reads LGQGSFGKV. Aspartate 198 serves as the catalytic Proton acceptor. 3 positions are modified to phosphoserine: serine 232, serine 372, and serine 389. Residues 331–400 form the AGC-kinase C-terminal domain; it reads ANIDWDKLYK…VATSIAEEYK (70 aa). The Protein kinase 2 domain occupies 426 to 683; the sequence is YELKEDIGVG…AEQILKHSWI (258 aa). ATP-binding positions include 432-440 and lysine 455; that span reads IGVGSYSVC. The active-site Proton acceptor is the aspartate 543. Phosphothreonine is present on threonine 581.

Belongs to the protein kinase superfamily. AGC Ser/Thr protein kinase family. S6 kinase subfamily. In terms of assembly, forms a complex with MAPK3/ERK1 but not with MAPK9 or MAPK14 in serum-starved cells. The cofactor is Mg(2+). In terms of processing, phosphorylated at Ser-232, Ser-372, and Ser-389 in serum-starved cells.

It localises to the cytoplasm. Its subcellular location is the cytosol. The protein resides in the nucleus. The enzyme catalyses L-seryl-[protein] + ATP = O-phospho-L-seryl-[protein] + ADP + H(+). It carries out the reaction L-threonyl-[protein] + ATP = O-phospho-L-threonyl-[protein] + ADP + H(+). Its activity is regulated as follows. Constitutively activated by phosphorylation at Ser-232, Ser-372, and Ser-389 in serum-starved cells. Does not require growth factor stimulation for significant kinase activity. Its function is as follows. Constitutively active serine/threonine-protein kinase that exhibits growth-factor-independent kinase activity and that may participate in p53/TP53-dependent cell growth arrest signaling and play an inhibitory role during embryogenesis. This is Ribosomal protein S6 kinase alpha-6 (RPS6KA6) from Homo sapiens (Human).